The primary structure comprises 506 residues: TOM1-like protein 3 (506 aa).

Positions 12–141 (ATNDMLIGPD…ELRSAGIEFP (130 aa)) constitute a VHS domain. The GAT domain occupies 180–268 (DASALSMEEI…VLQHHDDKAK (89 aa)). Disordered regions lie at residues 266-328 (KAKG…PPSS), 351-384 (ETFENVKPPSTSQSSNHDYSAPIFDEPVPQSKSP), and 398-477 (EQLP…PEDI). A compositionally biased stretch (acidic residues) spans 288–298 (DDDDDESDDDF). Residue Ser-294 is modified to Phosphoserine. Polar residues predominate over residues 358 to 368 (PPSTSQSSNHD). Position 383 is a phosphoserine (Ser-383). Residues 450-460 (QSRNLSLNPTA) are compositionally biased toward polar residues. A compositionally biased stretch (basic and acidic residues) spans 468-477 (PKKDDKPEDI).

It belongs to the TOM1 family. In terms of tissue distribution, preferentially expressed in cauline leaves.

The protein resides in the membrane. Its function is as follows. Might contribute to the loading of the ESCRT machinery. The protein is TOM1-like protein 3 of Arabidopsis thaliana (Mouse-ear cress).